Reading from the N-terminus, the 219-residue chain is Vesicle-associated membrane protein 721 (219 aa).

At 1-196 (MAQQSLIYSF…MWLQNMKIKL (196 aa)) the chain is on the cytoplasmic side. A Longin domain is found at 10–114 (FVARGTVILV…SLNKEFGSKL (105 aa)). Residues 130–190 (KLAKVKAQVS…TQMRRKMWLQ (61 aa)) enclose the v-SNARE coiled-coil homology domain. The chain crosses the membrane as a helical; Anchor for type IV membrane protein span at residues 197–217 (IVLAIIIALILIIVLSVCHGF). At 218–219 (KC) the chain is on the vesicular side.

Belongs to the synaptobrevin family. Expressed in flowers, leaves, stems and roots.

It localises to the cell membrane. The protein resides in the early endosome membrane. Functionally, involved in the targeting and/or fusion of transport vesicles to their target membrane. This chain is Vesicle-associated membrane protein 721, found in Arabidopsis thaliana (Mouse-ear cress).